The primary structure comprises 341 residues: Methionine import ATP-binding protein MetN 2 (341 aa).

In terms of domain architecture, ABC transporter spans 2-241; the sequence is IQFKNISKHY…PQHPTTKTFI (240 aa). ATP is bound at residue 38-45; that stretch reads GYSGAGKS.

The protein belongs to the ABC transporter superfamily. Methionine importer (TC 3.A.1.24) family. The complex is composed of two ATP-binding proteins (MetN), two transmembrane proteins (MetI) and a solute-binding protein (MetQ).

It is found in the cell inner membrane. It catalyses the reaction L-methionine(out) + ATP + H2O = L-methionine(in) + ADP + phosphate + H(+). The enzyme catalyses D-methionine(out) + ATP + H2O = D-methionine(in) + ADP + phosphate + H(+). Functionally, part of the ABC transporter complex MetNIQ involved in methionine import. Responsible for energy coupling to the transport system. In Acinetobacter baylyi (strain ATCC 33305 / BD413 / ADP1), this protein is Methionine import ATP-binding protein MetN 2.